The following is a 56-amino-acid chain: Large ribosomal subunit protein bL32 (56 aa).

The disordered stretch occupies residues 1–40; sequence MAVQQNKKSRSKRGMRRSHDSLGTAQLSVDATSGELHRRH. Basic residues predominate over residues 7–16; sequence KKSRSKRGMR. Over residues 21-31 the composition is skewed to polar residues; sequence SLGTAQLSVDA.

It belongs to the bacterial ribosomal protein bL32 family.

This chain is Large ribosomal subunit protein bL32, found in Shewanella halifaxensis (strain HAW-EB4).